Reading from the N-terminus, the 424-residue chain is Histidine--tRNA ligase (424 aa).

Belongs to the class-II aminoacyl-tRNA synthetase family. Homodimer.

The protein resides in the cytoplasm. The enzyme catalyses tRNA(His) + L-histidine + ATP = L-histidyl-tRNA(His) + AMP + diphosphate + H(+). This chain is Histidine--tRNA ligase, found in Protochlamydia amoebophila (strain UWE25).